The primary structure comprises 2070 residues: Multiple PDZ domain protein (2070 aa).

The L27 domain maps to 1–63 (MLEAIDKNRA…SVQQLKDQVN (63 aa)). The PDZ 1 domain occupies 137–224 (VFELLKPPSG…TVQLVIARGS (88 aa)). Ser-230 is subject to Phosphoserine. 2 consecutive PDZ domains span residues 257-337 (TIEL…ARGA) and 377-463 (DVEL…MRRG). Ser-483 is modified (phosphoserine). 2 PDZ domains span residues 553–634 (VAHV…CRRT) and 700–786 (HIEL…VAKP). Ser-790 and Ser-1078 each carry phosphoserine. The 82-residue stretch at 1008-1089 (TINIAKGNSS…IGPDIKITYV (82 aa)) folds into the PDZ 6 domain. The tract at residues 1121–1140 (DIPELPEREEGEGEESELQN) is disordered. The PDZ 7 domain maps to 1151–1243 (RVELWREPSK…PVVFMVQSII (93 aa)). Arg-1170 bears the Omega-N-methylarginine mark. The disordered stretch occupies residues 1278–1324 (ADKAPSQSESEPEKAPLCSVPPPPPSAFAEMGSDHTQSSASKISQDV). Over residues 1311–1321 (DHTQSSASKIS) the composition is skewed to polar residues. 2 PDZ domains span residues 1350–1433 (MIEL…IRNK) and 1483–1564 (HLEL…HAEN). The interval 1567–1612 (SQAVPSAAGAASGEKKNSSQSLMVPQSGSPEPESIRNTSRSSTPAI) is disordered. The segment covering 1584 to 1610 (SSQSLMVPQSGSPEPESIRNTSRSSTP) has biased composition (polar residues). PDZ domains follow at residues 1629–1712 (TIEI…YRDE) and 1725–1807 (TIEL…GRIK). Phosphoserine is present on residues Ser-1818 and Ser-1824. PDZ domains are found at residues 1862-1948 (TVEM…VAGG) and 1987-2070 (SITL…MVLS).

Interacts with CLDN5, DLG4, GRIN1, F11R/JAM, CLDN1, NG2, CRB1, MPP4 and PALS1. Interacts with HTR2A, HTR2B, HTR2C, PLEKHA1/TAPP1, PLEKHA2/TAPP2, CXADR, SYNGAP1, CAMK2A and CAMK2B. Interacts with FAT4 (via cytoplasmic domain). Interacts with DLL1. As to quaternary structure, (Microbial infection) Interacts with human adenovirus type 9 E4-ORF1 protein. In terms of assembly, (Microbial infection) Interacts with human papillomavirus 18/HPV18 protein E6. As to expression, expressed in heart, brain, placenta, liver, skeletal muscle, kidney and pancreas.

It is found in the cell membrane. The protein localises to the apical cell membrane. The protein resides in the postsynaptic density. It localises to the cell projection. Its subcellular location is the dendrite. It is found in the cell junction. The protein localises to the tight junction. The protein resides in the synapse. It localises to the synaptosome. Its function is as follows. Member of the NMDAR signaling complex that may play a role in control of AMPAR potentiation and synaptic plasticity in excitatory synapses. Promotes clustering of HT2RC at the cell surface. This is Multiple PDZ domain protein (MPDZ) from Homo sapiens (Human).